Reading from the N-terminus, the 79-residue chain is uncharacterized protein (79 aa).

Residues methionine 1–glutamate 27 form a disordered region.

This is an uncharacterized protein from Homo sapiens (Human).